The primary structure comprises 702 residues: MNSLFASTARGLEELLKTELEKLGAVECQVVQGGVHFQGDTRLIYQSLMWSRLASRIILPMGECKVYSDLDLYLGVQAINWTEIFNPGATFAVHFSGLNDTIRNSQYGAMKVKDAIVDAFTRKNLPRPNVDRESPDLRINVWLNKETASIALDLSGDGLHLRGYRDRAGLAPIKETLAAAIVMRSGWQPGTPLLDPMCGSGTLLIEAAMWATDRAPGLHRGHWGFSGWAQHDETIWQEVKAEAQTRARKGLAEYSSHFYGSDSDARVIERARSNARRAGIGELITFEVKDVAQLSNPLPKGPYGTVISNPPYGERLDSEPALIALHSLLGRIMKNQFGGWNLSLFSASPDLLGSLQLRADKQFKAKNGPLDCVQKNYHIAETTADSKPATVAEDYANRLRKNLKKLEKWARQEGIECYRLYDADLPEYNVAVDRYGDWAVIQEYAPPKTVDAQKARQRLFDIIAATLSVLGIPPNKLVLKTRERQKGKNQYQKMSEKGEFLEVSEYNARLWVNLTDYLDTGLFLDHRIARRMLGEMSQGKDFLNLFSYTGSASVHAGLGGARSTTTVDMSRTYLEWAERNLRLNGLSGRAHRLIQADCLGWLREANEQFDLIFIDPPTFSNSKRMEASFDVQRDHVALMKDLKRLLRKGGTIMFSNNKRGFRMDLEGLAELGLTAQEITQKTLSPDFARNRQIHNCWLICAA.

In terms of domain architecture, THUMP spans 43-154 (LIYQSLMWSR…KETASIALDL (112 aa)).

This sequence belongs to the methyltransferase superfamily. RlmKL family.

It localises to the cytoplasm. The enzyme catalyses guanosine(2445) in 23S rRNA + S-adenosyl-L-methionine = N(2)-methylguanosine(2445) in 23S rRNA + S-adenosyl-L-homocysteine + H(+). The catalysed reaction is guanosine(2069) in 23S rRNA + S-adenosyl-L-methionine = N(2)-methylguanosine(2069) in 23S rRNA + S-adenosyl-L-homocysteine + H(+). Its function is as follows. Specifically methylates the guanine in position 2445 (m2G2445) and the guanine in position 2069 (m7G2069) of 23S rRNA. The sequence is that of Ribosomal RNA large subunit methyltransferase K/L from Salmonella arizonae (strain ATCC BAA-731 / CDC346-86 / RSK2980).